The chain runs to 78 residues: DNA-directed RNA polymerase subunit Rpo5 (78 aa).

The protein belongs to the archaeal Rpo5/eukaryotic RPB5 RNA polymerase subunit family. In terms of assembly, part of the RNA polymerase complex.

The protein localises to the cytoplasm. The catalysed reaction is RNA(n) + a ribonucleoside 5'-triphosphate = RNA(n+1) + diphosphate. Functionally, DNA-dependent RNA polymerase (RNAP) catalyzes the transcription of DNA into RNA using the four ribonucleoside triphosphates as substrates. The chain is DNA-directed RNA polymerase subunit Rpo5 from Methanococcus maripaludis (strain C6 / ATCC BAA-1332).